Consider the following 31-residue polypeptide: Potassium channel toxin alpha-KTx 5.5 (31 aa).

Disulfide bonds link C3–C21, C8–C26, and C12–C28. The interval 6-9 (RRCE) is [R/K]XCQ motif. Residue H31 is modified to Histidine amide.

In terms of tissue distribution, expressed by the venom gland.

The protein resides in the secreted. Blocks small conductance calcium-activated potassium channels. This chain is Potassium channel toxin alpha-KTx 5.5, found in Hottentotta tamulus (Eastern Indian scorpion).